The sequence spans 433 residues: Mannan endo-1,4-beta-mannosidase 2 (433 aa).

An N-terminal signal peptide occupies residues 1 to 28; sequence MAAPTGNGPVIPILGFLTCVAFIYLSFG. A glycan (N-linked (GlcNAc...) asparagine) is linked at Asn-46. Residue Trp-98 coordinates substrate. A glycan (N-linked (GlcNAc...) asparagine) is linked at Asn-169. A substrate-binding site is contributed by Asn-214. Glu-215 (proton donor) is an active-site residue. Tyr-295 contacts substrate. Glu-335 functions as the Nucleophile in the catalytic mechanism. Position 377 (Trp-377) interacts with substrate.

It belongs to the glycosyl hydrolase 5 (cellulase A) family. Expressed in roots, stems, leaves and seeds.

It localises to the secreted. It catalyses the reaction Random hydrolysis of (1-&gt;4)-beta-D-mannosidic linkages in mannans, galactomannans and glucomannans.. The protein is Mannan endo-1,4-beta-mannosidase 2 (MAN2) of Arabidopsis thaliana (Mouse-ear cress).